The sequence spans 469 residues: Glutamate--tRNA ligase 1 (469 aa).

Positions 9–19 (PSPTGYLHVGG) match the 'HIGH' region motif. Residues C98, C100, C125, and E127 each contribute to the Zn(2+) site. A 'KMSKS' region motif is present at residues 236–240 (RLSKR). K239 provides a ligand contact to ATP.

This sequence belongs to the class-I aminoacyl-tRNA synthetase family. Glutamate--tRNA ligase type 1 subfamily. As to quaternary structure, monomer. Zn(2+) serves as cofactor.

The protein localises to the cytoplasm. It carries out the reaction tRNA(Glu) + L-glutamate + ATP = L-glutamyl-tRNA(Glu) + AMP + diphosphate. Its function is as follows. Catalyzes the attachment of glutamate to tRNA(Glu) in a two-step reaction: glutamate is first activated by ATP to form Glu-AMP and then transferred to the acceptor end of tRNA(Glu). The polypeptide is Glutamate--tRNA ligase 1 (Nitrosococcus oceani (strain ATCC 19707 / BCRC 17464 / JCM 30415 / NCIMB 11848 / C-107)).